A 152-amino-acid chain; its full sequence is Transcriptional regulator MraZ (152 aa).

2 SpoVT-AbrB domains span residues A5–E52 and A81–T124.

This sequence belongs to the MraZ family. As to quaternary structure, forms oligomers.

It is found in the cytoplasm. The protein resides in the nucleoid. Negatively regulates its own expression and that of the subsequent genes in the proximal part of the division and cell wall (dcw) gene cluster. Acts by binding directly to DNA. May also regulate the expression of genes outside the dcw cluster. This is Transcriptional regulator MraZ from Pectobacterium carotovorum subsp. carotovorum (strain PC1).